Reading from the N-terminus, the 195-residue chain is Xanthine phosphoribosyltransferase (195 aa).

2 residues coordinate xanthine: leucine 20 and asparagine 27. 128–132 contributes to the 5-phospho-alpha-D-ribose 1-diphosphate binding site; it reads ANGQA. Lysine 156 contacts xanthine.

Belongs to the purine/pyrimidine phosphoribosyltransferase family. Xpt subfamily. In terms of assembly, homodimer.

It is found in the cytoplasm. The enzyme catalyses XMP + diphosphate = xanthine + 5-phospho-alpha-D-ribose 1-diphosphate. It participates in purine metabolism; XMP biosynthesis via salvage pathway; XMP from xanthine: step 1/1. In terms of biological role, converts the preformed base xanthine, a product of nucleic acid breakdown, to xanthosine 5'-monophosphate (XMP), so it can be reused for RNA or DNA synthesis. In Lactiplantibacillus plantarum (strain ATCC BAA-793 / NCIMB 8826 / WCFS1) (Lactobacillus plantarum), this protein is Xanthine phosphoribosyltransferase.